A 117-amino-acid polypeptide reads, in one-letter code: Conotoxin vil14.3 (117 aa).

Positions 1–22 (MGFRVLVLVVMATTSALPFTFS) are cleaved as a signal peptide. Residues 23 to 90 (EEPGRSPFRP…FAELSVGQRR (68 aa)) constitute a propeptide that is removed on maturation. Residues 53–79 (RADGQPPDMRQPEMRRPEMRRPEVRQP) form a disordered region. A compositionally biased stretch (basic and acidic residues) spans 62–79 (RQPEMRRPEMRRPEVRQP). 2 disulfides stabilise this stretch: cysteine 96–cysteine 116 and cysteine 100–cysteine 112.

The protein belongs to the conotoxin R superfamily. Expressed by the venom duct.

Its subcellular location is the secreted. In Conus villepinii (Villepin's cone), this protein is Conotoxin vil14.3.